The chain runs to 2012 residues: MWILALSLFQSFANVFSEDLHSSLYFVNASLQEVVFASTTGTLVPCPAAGIPPVTLRWYLATGEEIYDVPGIRHVHPNGTLQIFPFPPSSFSTLIHDNTYYCTAENPSGKIRSQDVHIKAVLREPYTVRVEDQKTMRGNVAVFKCIIPSSVEAYITVVSWEKDTVSLVSGSRFLITSTGALYIKDVQNEDGLYNYRCITRHRYTGETRQSNSARLFVSDPANSAPSILDGFDHRKAMAGQRVELPCKALGHPEPDYRWLKDNMPLELSGRFQKTVTGLLIENIRPSDSGSYVCEVSNRYGTAKVIGRLYVKQPLKATISPRKVKSSVGSQVSLSCSVTGTEDQELSWYRNGEILNPGKNVRITGINHENLIMDHMVKSDGGAYQCFVRKDKLSAQDYVQVVLEDGTPKIISAFSEKVVSPAEPVSLMCNVKGTPLPTITWTLDDDPILKGGSHRISQMITSEGNVVSYLNISSSQVRDGGVYRCTANNSAGVVLYQARINVRGPASIRPMKNITAIAGRDTYIHCRVIGYPYYSIKWYKNSNLLPFNHRQVAFENNGTLKLSDVQKEVDEGEYTCNVLVQPQLSTSQSVHVTVKVPPFIQPFEFPRFSIGQRVFIPCVVVSGDLPITITWQKDGRPIPGSLGVTIDNIDFTSSLRISNLSLMHNGNYTCIARNEAAAVEHQSQLIVRVPPKFVVQPRDQDGIYGKAVILNCSAEGYPVPTIVWKFSKGAGVPQFQPIALNGRIQVLSNGSLLIKHVVEEDSGYYLCKVSNDVGADVSKSMYLTVKIPAMITSYPNTTLATQGQKKEMSCTAHGEKPIIVRWEKEDRIINPEMARYLVSTKEVGEEVISTLQILPTVREDSGFFSCHAINSYGEDRGIIQLTVQEPPDPPEIEIKDVKARTITLRWTMGFDGNSPITGYDIECKNKSDSWDSAQRTKDVSPQLNSATIIDIHPSSTYSIRMYAKNRIGKSEPSNELTITADEAAPDGPPQEVHLEPISSQSIRVTWKAPKKHLQNGIIRGYQIGYREYSTGGNFQFNIISVDTSGDSEVYTLDNLNKFTQYGLVVQACNRAGTGPSSQEIITTTLEDVPSYPPENVQAIATSPESISISWSTLSKEALNGILQGFRVIYWANLMDGELGEIKNITTTQPSLELDGLEKYTNYSIQVLAFTRAGDGVRSEQIFTRTKEDVPGPPAGVKAAAASASMVFVSWLPPLKLNGIIRKYTVFCSHPYPTVISEFEASPDSFSYRIPNLSRNRQYSVWVVAVTSAGRGNSSEIITVEPLAKAPARILTFSGTVTTPWMKDIVLPCKAVGDPSPAVKWMKDSNGTPSLVTIDGRRSIFSNGSFIIRTVKAEDSGYYSCIANNNWGSDEIILNLQVQVPPDQPRLTVSKTTSSSITLSWLPGDNGGSSIRGYILQYSEDNSEQWGSFPISPSERSYRLENLKCGTWYKFTLTAQNGVGPGRISEIIEAKTLGKEPQFSKEQELFASINTTRVRLNLIGWNDGGCPITSFTLEYRPFGTTVWTTAQRTSLSKSYILYDLQEATWYELQMRVCNSAGCAEKQANFATLNYDGSTIPPLIKSVVQNEEGLTTNEGLKMLVTISCILVGVLLLFVLLLVVRRRRREQRLKRLRDAKSLAEMLMSKNTRTSDTLSKQQQTLRMHIDIPRAQLLIEERDTMETIDDRSTVLLTDADFGEAAKQKSLTVTHTVHYQSVSQATGPLVDVSDARPGTNPTTRRNAKAGPTARNRYASQWTLNRPHPTISAHTLTTDWRLPTPRAAGSVDKESDSYSVSPSQDTDRARSSMVSTESASSTYEELARAYEHAKMEEQLRHAKFTITECFISDTSSEQLTAGTNEYTDSLTSSTPSESGICRFTASPPKPQDGGRVMNMAVPKAHRPGDLIHLPPYLRMDFLLNRGGPGTSRDLSLGQACLEPQKSRTLKRPTVLEPIPMEAASSASSTREGQSWQPGAVATLPQREGAELGQAAKMSSSQESLLDSRGHLKGNNPYAKSYTLV.

The signal sequence occupies residues 1-17 (MWILALSLFQSFANVFS). Residues 18–1595 (EDLHSSLYFV…GLTTNEGLKM (1578 aa)) are Extracellular-facing. N-linked (GlcNAc...) asparagine glycosylation is found at Asn-28 and Asn-78. 9 consecutive Ig-like C2-type domains span residues 39 to 129 (TTGT…YTVR), 125 to 216 (PYTV…ARLF), 225 to 305 (PSIL…AKVI), 313 to 401 (PLKA…VQVV), 407 to 500 (PKII…ARIN), 504 to 592 (PASI…VHVT), 596 to 685 (PPFI…SQLI), 690 to 783 (PKFV…MYLT), and 787 to 883 (PAMI…LTVQ). Cystine bridges form between Cys-46-Cys-102, Cys-145-Cys-197, Cys-246-Cys-293, Cys-335-Cys-385, and Cys-428-Cys-484. Residues Asn-470, Asn-487, Asn-512, Asn-556, Asn-658, Asn-666, Asn-710, Asn-748, and Asn-795 are each glycosylated (N-linked (GlcNAc...) asparagine). 2 disulfides stabilise this stretch: Cys-525–Cys-575 and Cys-617–Cys-669. Cys-711 and Cys-766 are disulfide-bonded. Cys-809 and Cys-865 are oxidised to a cystine. 4 Fibronectin type-III domains span residues 885–982 (PPDP…ADEA), 987–1086 (PPQE…TLED), 1091–1187 (PPEN…TKED), and 1191–1285 (PPAG…AKAP). A glycan (N-linked (GlcNAc...) asparagine) is linked at Asn-924. N-linked (GlcNAc...) asparagine glycans are attached at residues Asn-1142, Asn-1160, Asn-1250, Asn-1271, and Asn-1341. The Ig-like C2-type 10 domain maps to 1285–1377 (PARILTFSGT…DEIILNLQVQ (93 aa)). Cys-1307 and Cys-1359 are joined by a disulfide. 2 Fibronectin type-III domains span residues 1379–1473 (PPDQ…TLGK) and 1474–1575 (EPQF…TIPP). Residue Asn-1488 is glycosylated (N-linked (GlcNAc...) asparagine). Residues 1596 to 1616 (LVTISCILVGVLLLFVLLLVV) traverse the membrane as a helical segment. At 1617–2012 (RRRRREQRLK…NPYAKSYTLV (396 aa)) the chain is on the cytoplasmic side. A required for netrin-mediated axon repulsion of neuronal growth cones region spans residues 1617-2012 (RRRRREQRLK…NPYAKSYTLV (396 aa)). Disordered regions lie at residues 1718-1810 (LVDV…ASST), 1855-1883 (TDSL…DGGR), and 1971-2012 (LPQR…YTLV). Residues 1799–1809 (SSMVSTESASS) show a composition bias toward low complexity. The span at 1855–1865 (TDSLTSSTPSE) shows a compositional bias: polar residues.

In terms of assembly, homodimer; mediates homophilic interactions to promote cell adhesion. Interacts with DCC; the interaction is abolished in response to NTN1. Interacts (via extracellular domain) with NTN1. Interacts (via extracellular domain) with UNC5C (via Ig-like C2-type domain). Interacts with PTK2. Interacts with FYN. Post-translationally, phosphorylated at tyrosine residues. Phosphorylation is enhanced by NTN1. As to expression, primarily expressed in brain.

It is found in the secreted. The protein resides in the cell membrane. Its subcellular location is the cell projection. It localises to the axon. The protein localises to the dendrite. It is found in the growth cone. The protein resides in the synapse. Its function is as follows. Cell adhesion molecule that plays a role in neuronal self-avoidance. Promotes repulsion between specific neuronal processes of either the same cell or the same subtype of cells. Mediates within retinal amacrine and ganglion cell subtypes both isoneuronal self-avoidance for creating an orderly dendritic arborization and heteroneuronal self-avoidance to maintain the mosaic spacing between amacrine and ganglion cell bodies. Receptor for netrin required for axon guidance independently of and in collaboration with the receptor DCC. Might also collaborate with UNC5C in NTN1-mediated axon repulsion independently of DCC. In spinal cord development plays a role in guiding commissural axons projection and pathfinding across the ventral midline to reach the floor plate upon ligand binding. Mediates intracellular signaling by stimulating the activation of MAPK8 and MAP kinase p38. Adhesion molecule that promotes lamina-specific synaptic connections in the retina: expressed in specific subsets of interneurons and retinal ganglion cells (RGCs) and promotes synaptic connectivity via homophilic interactions. This chain is Cell adhesion molecule DSCAM (DSCAM), found in Homo sapiens (Human).